We begin with the raw amino-acid sequence, 339 residues long: Holliday junction branch migration complex subunit RuvB (339 aa).

Positions 1–181 are large ATPase domain (RuvB-L); the sequence is MEERLVSGYE…FGMVHRLEFY (181 aa). ATP contacts are provided by residues L20, R21, G62, K65, T66, T67, 128–130, R171, Y181, and R218; that span reads EDF. Mg(2+) is bound at residue T66. The interval 182-252 is small ATPAse domain (RuvB-S); the sequence is SVEELMLIIN…NAKAALDLLE (71 aa). The segment at 255 to 339 is head domain (RuvB-H); sequence ELGLDPTDRL…NKNAGELSLW (85 aa). 2 residues coordinate DNA: R310 and R315.

This sequence belongs to the RuvB family. As to quaternary structure, homohexamer. Forms an RuvA(8)-RuvB(12)-Holliday junction (HJ) complex. HJ DNA is sandwiched between 2 RuvA tetramers; dsDNA enters through RuvA and exits via RuvB. An RuvB hexamer assembles on each DNA strand where it exits the tetramer. Each RuvB hexamer is contacted by two RuvA subunits (via domain III) on 2 adjacent RuvB subunits; this complex drives branch migration. In the full resolvosome a probable DNA-RuvA(4)-RuvB(12)-RuvC(2) complex forms which resolves the HJ.

Its subcellular location is the cytoplasm. It carries out the reaction ATP + H2O = ADP + phosphate + H(+). In terms of biological role, the RuvA-RuvB-RuvC complex processes Holliday junction (HJ) DNA during genetic recombination and DNA repair, while the RuvA-RuvB complex plays an important role in the rescue of blocked DNA replication forks via replication fork reversal (RFR). RuvA specifically binds to HJ cruciform DNA, conferring on it an open structure. The RuvB hexamer acts as an ATP-dependent pump, pulling dsDNA into and through the RuvAB complex. RuvB forms 2 homohexamers on either side of HJ DNA bound by 1 or 2 RuvA tetramers; 4 subunits per hexamer contact DNA at a time. Coordinated motions by a converter formed by DNA-disengaged RuvB subunits stimulates ATP hydrolysis and nucleotide exchange. Immobilization of the converter enables RuvB to convert the ATP-contained energy into a lever motion, pulling 2 nucleotides of DNA out of the RuvA tetramer per ATP hydrolyzed, thus driving DNA branch migration. The RuvB motors rotate together with the DNA substrate, which together with the progressing nucleotide cycle form the mechanistic basis for DNA recombination by continuous HJ branch migration. Branch migration allows RuvC to scan DNA until it finds its consensus sequence, where it cleaves and resolves cruciform DNA. This chain is Holliday junction branch migration complex subunit RuvB, found in Carboxydothermus hydrogenoformans (strain ATCC BAA-161 / DSM 6008 / Z-2901).